Reading from the N-terminus, the 513-residue chain is Steroid (22S)-hydroxylase (513 aa).

A helical transmembrane segment spans residues 8–28 (TLLPLLLLPSLLSLLLFLILL). The segment at 252–277 (DIKEEDQEEEEVKTEDEAEMSKSDHV) is disordered. Over residues 254–269 (KEEDQEEEEVKTEDEA) the composition is skewed to acidic residues. A heme-binding site is contributed by C462.

The protein belongs to the cytochrome P450 family. Heme is required as a cofactor. As to expression, expressed in stems, leaves, shoots, and roots, with a higher expression in siliques and apical shoots.

Its subcellular location is the membrane. It carries out the reaction a C27-steroid + reduced [NADPH--hemoprotein reductase] + O2 = a (22S)-22-hydroxy C27-steroid + oxidized [NADPH--hemoprotein reductase] + H2O + H(+). The enzyme catalyses a C28-steroid + reduced [NADPH--hemoprotein reductase] + O2 = a (22S)-22-hydroxy C28-steroid + oxidized [NADPH--hemoprotein reductase] + H2O + H(+). It catalyses the reaction a C29-steroid + reduced [NADPH--hemoprotein reductase] + O2 = a (22S)-22-hydroxy C29-steroid + oxidized [NADPH--hemoprotein reductase] + H2O + H(+). The catalysed reaction is cholesterol + reduced [NADPH--hemoprotein reductase] + O2 = (22S)-22-hydroxycholesterol + oxidized [NADPH--hemoprotein reductase] + H2O + H(+). It carries out the reaction cholestanol + reduced [NADPH--hemoprotein reductase] + O2 = (22S)-22-hydroxycholestanol + oxidized [NADPH--hemoprotein reductase] + H2O + H(+). The enzyme catalyses campestanol + reduced [NADPH--hemoprotein reductase] + O2 = 6-deoxycathasterone + oxidized [NADPH--hemoprotein reductase] + H2O + H(+). It catalyses the reaction campesterol + reduced [NADPH--hemoprotein reductase] + O2 = (22S)-22-hydroxycampesterol + oxidized [NADPH--hemoprotein reductase] + H2O + H(+). The catalysed reaction is 6-oxocampestanol + reduced [NADPH--hemoprotein reductase] + O2 = cathasterone + oxidized [NADPH--hemoprotein reductase] + H2O + H(+). It carries out the reaction sitosterol + reduced [NADPH--hemoprotein reductase] + O2 = (22S)-22-hydroxysitosterol + oxidized [NADPH--hemoprotein reductase] + H2O + H(+). Its pathway is plant hormone biosynthesis; brassinosteroid biosynthesis. Functionally, catalyzes the C22-alpha-hydroxylation step in brassinosteroids biosynthesis. Converts campesterol (CR) to (22S)-22-hydroxycampesterol (22-OHCR, 22-hydroxyCR), campestanol (CN) to 6-deoxycathasterone (6-deoxoCT), and 6-oxocampestanol (6-oxoCN) to cathasterone (CT). Can also use cholesterol and cholestanol as substrates. In Arabidopsis thaliana (Mouse-ear cress), this protein is Steroid (22S)-hydroxylase.